The following is a 122-amino-acid chain: Small ribosomal subunit protein uS13 (122 aa).

The tract at residues 97-122 is disordered; that stretch reads PVRGQRTHTNARTRKGPARAIAGKKK.

The protein belongs to the universal ribosomal protein uS13 family. As to quaternary structure, part of the 30S ribosomal subunit. Forms a loose heterodimer with protein S19. Forms two bridges to the 50S subunit in the 70S ribosome.

Functionally, located at the top of the head of the 30S subunit, it contacts several helices of the 16S rRNA. In the 70S ribosome it contacts the 23S rRNA (bridge B1a) and protein L5 of the 50S subunit (bridge B1b), connecting the 2 subunits; these bridges are implicated in subunit movement. Contacts the tRNAs in the A and P-sites. This is Small ribosomal subunit protein uS13 from Bartonella bacilliformis (strain ATCC 35685 / KC583 / Herrer 020/F12,63).